A 152-amino-acid polypeptide reads, in one-letter code: MTKPIAENRRARYDYFIEETMEAGLMLTGTEVKSLRVGRANIAESYASVEGRTIKLINADIPPYGHANRFNHEPRRHRTLLLHRKQIDKLIGAVQRDGRTLIPLKLYWNEKGLAKLEIGLAKGKKNHDKRETEAARDWQRDKARLMKGDRGD.

The tract at residues 122–152 (KGKKNHDKRETEAARDWQRDKARLMKGDRGD) is disordered. The segment covering 128 to 152 (DKRETEAARDWQRDKARLMKGDRGD) has biased composition (basic and acidic residues).

Belongs to the SmpB family.

The protein localises to the cytoplasm. Its function is as follows. Required for rescue of stalled ribosomes mediated by trans-translation. Binds to transfer-messenger RNA (tmRNA), required for stable association of tmRNA with ribosomes. tmRNA and SmpB together mimic tRNA shape, replacing the anticodon stem-loop with SmpB. tmRNA is encoded by the ssrA gene; the 2 termini fold to resemble tRNA(Ala) and it encodes a 'tag peptide', a short internal open reading frame. During trans-translation Ala-aminoacylated tmRNA acts like a tRNA, entering the A-site of stalled ribosomes, displacing the stalled mRNA. The ribosome then switches to translate the ORF on the tmRNA; the nascent peptide is terminated with the 'tag peptide' encoded by the tmRNA and targeted for degradation. The ribosome is freed to recommence translation, which seems to be the essential function of trans-translation. The protein is SsrA-binding protein of Caulobacter sp. (strain K31).